The primary structure comprises 415 residues: L-cysteine:1D-myo-inositol 2-amino-2-deoxy-alpha-D-glucopyranoside ligase (415 aa).

Position 43 (Cys-43) interacts with Zn(2+). L-cysteinyl-5'-AMP is bound by residues 43–46 (CGIT), Thr-58, and 81–83 (NVT). The 'HIGH' region signature appears at 45–55 (ITPYDATHLGH). The 'ERGGDP' region motif lies at 187 to 192 (ERGGDP). Trp-227 is an L-cysteinyl-5'-AMP binding site. A Zn(2+)-binding site is contributed by Cys-231. L-cysteinyl-5'-AMP is bound at residue 249–251 (GSD). His-256 provides a ligand contact to Zn(2+). Ile-283 is a binding site for L-cysteinyl-5'-AMP. Residues 289–293 (KMSKS) carry the 'KMSKS' region motif.

Belongs to the class-I aminoacyl-tRNA synthetase family. MshC subfamily. As to quaternary structure, monomer. It depends on Zn(2+) as a cofactor.

It catalyses the reaction 1D-myo-inositol 2-amino-2-deoxy-alpha-D-glucopyranoside + L-cysteine + ATP = 1D-myo-inositol 2-(L-cysteinylamino)-2-deoxy-alpha-D-glucopyranoside + AMP + diphosphate + H(+). Catalyzes the ATP-dependent condensation of GlcN-Ins and L-cysteine to form L-Cys-GlcN-Ins. The chain is L-cysteine:1D-myo-inositol 2-amino-2-deoxy-alpha-D-glucopyranoside ligase from Saccharomonospora viridis (strain ATCC 15386 / DSM 43017 / JCM 3036 / CCUG 5913 / NBRC 12207 / NCIMB 9602 / P101) (Thermoactinomyces viridis).